The following is a 292-amino-acid chain: 4-hydroxy-tetrahydrodipicolinate synthase (292 aa).

T45 is a binding site for pyruvate. Y133 serves as the catalytic Proton donor/acceptor. Residue K161 is the Schiff-base intermediate with substrate of the active site. I203 contributes to the pyruvate binding site.

The protein belongs to the DapA family. Homotetramer; dimer of dimers.

It localises to the cytoplasm. The enzyme catalyses L-aspartate 4-semialdehyde + pyruvate = (2S,4S)-4-hydroxy-2,3,4,5-tetrahydrodipicolinate + H2O + H(+). It functions in the pathway amino-acid biosynthesis; L-lysine biosynthesis via DAP pathway; (S)-tetrahydrodipicolinate from L-aspartate: step 3/4. In terms of biological role, catalyzes the condensation of (S)-aspartate-beta-semialdehyde [(S)-ASA] and pyruvate to 4-hydroxy-tetrahydrodipicolinate (HTPA). The polypeptide is 4-hydroxy-tetrahydrodipicolinate synthase (Salmonella paratyphi A (strain AKU_12601)).